The primary structure comprises 264 residues: tRNA pseudouridine synthase A (264 aa).

Residue D51 is the Nucleophile of the active site. Substrate is bound at residue Y109.

Belongs to the tRNA pseudouridine synthase TruA family. Homodimer.

It catalyses the reaction uridine(38/39/40) in tRNA = pseudouridine(38/39/40) in tRNA. Formation of pseudouridine at positions 38, 39 and 40 in the anticodon stem and loop of transfer RNAs. This chain is tRNA pseudouridine synthase A, found in Photorhabdus laumondii subsp. laumondii (strain DSM 15139 / CIP 105565 / TT01) (Photorhabdus luminescens subsp. laumondii).